The primary structure comprises 224 residues: 2-phospho-L-lactate guanylyltransferase (224 aa).

It belongs to the CofC family. As to quaternary structure, homodimer.

The enzyme catalyses (2S)-2-phospholactate + GTP + H(+) = (2S)-lactyl-2-diphospho-5'-guanosine + diphosphate. It participates in cofactor biosynthesis; coenzyme F420 biosynthesis. Guanylyltransferase that catalyzes the activation of (2S)-2-phospholactate (2-PL) as (2S)-lactyl-2-diphospho-5'-guanosine, via the condensation of 2-PL with GTP. It is involved in the biosynthesis of coenzyme F420, a hydride carrier cofactor. The protein is 2-phospho-L-lactate guanylyltransferase of Methanobrevibacter smithii (strain ATCC 35061 / DSM 861 / OCM 144 / PS).